A 1112-amino-acid polypeptide reads, in one-letter code: MARPLRAPLRRSFSDHIRDSTARALDVIWKNTRDRRLAEIEAKEACDWLRAAGFPQYAQLYEDLLFPIDISSVKREHDFLDRDAIEALCRRLNTLNKCAVMKLEISPHRKRSEDSDEDEPCAISGKWTFQRDSKRWSRLEEFDVFSPKQDPIPGSPDAVHLKSAPSHENMQTDLSDRQEVASVHSTGSLTTHAPQRGEAAPARTNSVLSVCSSGTFVGNDDSFCSLPSPKELSSFSFSMKGHEKAAKSKTHSLLKRMESLKLKGSHHSKHKAPSKLGLIISGPILQEGVDEEKLKQLNCVEISALNGNHINVPMVRKRSISSSTQTSSSSSQSETSSNVSTPSPVTRTRSLSACNKRGGMYLEGFDPFNQSTFNNVMEQNCKNRESYPEDTVFYIPEDHKPGTFPKALSNGSFSPSGNNSSVNWRTGSFHGPGHISLRRENSSPKELKRRNSSSSVSSRLSIYDNVPGSILYSSSGDLADLENEDIFPELDDILYHVKGMQRIVNQWSEKFSDEGDSDSALDSVSPCPSSPKQIHLDVDNDRATPSDLDSTGNSLNEPEEPSDIPERRDSGVGASLTRSNRHRLRWHSFQSSHRPSLNSVSLQINCQSVAQMNLLQKYSLLKLTALLEKYTPSNKHGFSWAVPKFMKRIKVPDYKDRNVFGVPLTVNVQRTGQPLPQSIQQAMRYLRNHCLDQVGLFRKSGVKSRIQALRQMNESTIDCVNYEGQSAYDVADMLKQYFRDLPEPLMTNKLSETFLQIYQYVPKDQRLQAIKAAIMLLPDENREVLQTLLYFLSDVTAAVKENQMTPTNLAVCLAPSLFHLNTLKRENSSPRVMQRKQSLGKPDQKDLNENLAATQGLAHMIAECKKLFQVPEEMSRCRNSYTEQELKPLTLEALGRLCNDDSADYQHFLQDCVDSLFKEVKEKFKGWVSYSTSEQAELSYKKVSEGPPLRLWRATIEVPATPEEILKRLLKEQHLWDVDLLDSKVIEILDSQTEIYQYVQNSMAPHPARDYVVLRTWRTNLPKGACALLLTSVDHDRAPVVGVRVNVLLARYLIEPCGSGKSKLTYMCRADLRGHMPEWYTKSFGHLCAAEVVKIRDSFSHQNTETKDTKSR.

In terms of domain architecture, SAM spans 37-104; that stretch reads LAEIEAKEAC…LNKCAVMKLE (68 aa). Residues Ser112, Ser115, and Ser155 each carry the phosphoserine modification. Disordered regions lie at residues 146–203, 318–350, 405–459, and 512–574; these read SPKQ…APAR, RSISSSTQTSSSSSQSETSSNVSTPSPVTRTRS, PKAL…VSSR, and SDEG…GVGA. The segment covering 183–193 has biased composition (polar residues); it reads VHSTGSLTTHA. A focal adhesion-targeting (FAT) region spans residues 296-468; sequence QLNCVEISAL…RLSIYDNVPG (173 aa). Low complexity-rich tracts occupy residues 320–348 and 409–423; these read ISSSTQTSSSSSQSETSSNVSTPSPVTRT and SNGSFSPSGNNSSVN. A Phosphoserine modification is found at Ser343. Residues 437-446 show a composition bias toward basic and acidic residues; the sequence is LRRENSSPKE. Positions 520–532 are enriched in polar residues; sequence ALDSVSPCPSSPK. Positions 534-544 are enriched in basic and acidic residues; it reads IHLDVDNDRAT. Residues 547 to 556 show a composition bias toward polar residues; it reads DLDSTGNSLN. Positions 635–657 are polybasic cluster (PBR); sequence KHGFSWAVPKFMKRIKVPDYKDR. In terms of domain architecture, Rho-GAP spans 662–868; sequence VPLTVNVQRT…HMIAECKKLF (207 aa). Residues 898-1105 enclose the START domain; sequence CNDDSADYQH…RDSFSHQNTE (208 aa).

In terms of assembly, interacts with EF1A1, facilitates EF1A1 distribution to the membrane periphery and ruffles upon growth factor stimulation and suppresses cell migration. Interacts with tensin TNS1 (via N-terminus); the interaction is decreased by phosphorylation of TNS1. Interacts with TNS3 and PTEN; in resting cells, interacts with TNS3 (via C2 tensin-type domain) but, following growth factor stimulation, TNS3 and PTEN are phosphorylated which leads to weakened interaction with TNS3 and enhanced interaction with PTEN. Interacts (via C-terminus) with tensin TNS4 (via SH2 domain); the interaction is independent of tyrosine phosphorylation of DLC1.

The protein localises to the cytoplasm. The protein resides in the cell junction. It is found in the focal adhesion. It localises to the membrane. Functionally, functions as a GTPase-activating protein for the small GTPases RHOA, RHOB, RHOC and CDC42, terminating their downstream signaling. This induces morphological changes and detachment through cytoskeletal reorganization, playing a critical role in biological processes such as cell migration and proliferation. Also functions in vivo as an activator of the phospholipase PLCD1. Active DLC1 increases cell migration velocity but reduces directionality. Required for growth factor-induced epithelial cell migration; in resting cells, interacts with TNS3 while PTEN interacts with the p85 regulatory subunit of the PI3K kinase complex but growth factor stimulation induces phosphorylation of TNS3 and PTEN, causing them to change their binding preference so that PTEN interacts with DLC1 and TNS3 interacts with p85. The PTEN-DLC1 complex translocates to the posterior of migrating cells to activate RHOA while the TNS3-p85 complex translocates to the leading edge of migrating cells to promote RAC1 activation. The sequence is that of Rho GTPase-activating protein 7 (DLC1) from Bos taurus (Bovine).